We begin with the raw amino-acid sequence, 718 residues long: Catalase-peroxidase (718 aa).

A cross-link (tryptophyl-tyrosyl-methioninium (Trp-Tyr) (with M-246)) is located at residues 92 to 220; sequence WHAAGTYRTA…LASVMMGLIY (129 aa). Catalysis depends on histidine 93, which acts as the Proton acceptor. A cross-link (tryptophyl-tyrosyl-methioninium (Tyr-Met) (with W-92)) is located at residues 220–246; that stretch reads YVNPEGVDGHPDPLKTANDVRVTFERM. Histidine 261 is a heme b binding site.

The protein belongs to the peroxidase family. Peroxidase/catalase subfamily. Homodimer or homotetramer. Requires heme b as cofactor. Formation of the three residue Trp-Tyr-Met cross-link is important for the catalase, but not the peroxidase activity of the enzyme.

The catalysed reaction is H2O2 + AH2 = A + 2 H2O. It carries out the reaction 2 H2O2 = O2 + 2 H2O. In terms of biological role, bifunctional enzyme with both catalase and broad-spectrum peroxidase activity. This Shewanella halifaxensis (strain HAW-EB4) protein is Catalase-peroxidase.